The following is a 416-amino-acid chain: UDP-N-acetylmuramoylalanine--D-glutamate ligase (416 aa).

104–110 serves as a coordination point for ATP; the sequence is GSNGKST.

It belongs to the MurCDEF family.

The protein resides in the cytoplasm. The catalysed reaction is UDP-N-acetyl-alpha-D-muramoyl-L-alanine + D-glutamate + ATP = UDP-N-acetyl-alpha-D-muramoyl-L-alanyl-D-glutamate + ADP + phosphate + H(+). Its pathway is cell wall biogenesis; peptidoglycan biosynthesis. Its function is as follows. Cell wall formation. Catalyzes the addition of glutamate to the nucleotide precursor UDP-N-acetylmuramoyl-L-alanine (UMA). The protein is UDP-N-acetylmuramoylalanine--D-glutamate ligase of Francisella tularensis subsp. holarctica (strain FTNF002-00 / FTA).